A 300-amino-acid chain; its full sequence is MKLFLLAAAAFSAPALTVSELNHIKSLNPRWKAGIPKRFEGLTKDEISSLLMPVSFLKNAKGAAPRGTFTDKDDVPESFDFREEYPHCIPEVVDQGGCGSCWAFSSVATFGDRRCVAGLDKKPVKYSPQYVVSCDHGDMACNGGWLPNVWKFLTKTGTTTDECVPYKSGSTTLRGTCPTKCADGSSKVHLATATSYKDYGLDIPAMMKALSTSGPLQVAFLVHSDFMYYESGVYQHTYGYMEGGHAVEMVGYGTDDDGVDYWIIKNSWGPDWGEDGYFRMIRGINDCSIEEQAYAGFFDE.

An N-terminal signal peptide occupies residues 1 to 19 (MKLFLLAAAAFSAPALTVS). 3 cysteine pairs are disulfide-bonded: Cys88-Cys115, Cys98-Cys141, and Cys134-Cys177. The active site involves Cys101. Catalysis depends on residues His245 and Asn266.

Belongs to the peptidase C1 family.

The protein resides in the vacuole. Its function is as follows. Thiol protease which is required for parasite excystation and invasion of the proximal small intestine of the human host. The chain is Cathepsin B-like CP2 (CP2) from Giardia intestinalis (Giardia lamblia).